The sequence spans 273 residues: Anthranilate synthase beta subunit 2, chloroplastic (273 aa).

A chloroplast-targeting transit peptide spans 1 to 36; sequence MAATTLYNSCLLQPKYGFTTRRLNQSLVNSLTNPTR. Residues 71–270 form the Glutamine amidotransferase type-1 domain; it reads PIIVIDNYDS…IKLVEKKESE (200 aa). Cys-149 acts as the Nucleophile in catalysis. Residues His-244 and Glu-246 contribute to the active site.

In terms of assembly, heterotetramer consisting of two non-identical subunits: a beta subunit and a large alpha subunit.

It is found in the plastid. It localises to the chloroplast. It carries out the reaction chorismate + L-glutamine = anthranilate + pyruvate + L-glutamate + H(+). The protein operates within amino-acid biosynthesis; L-tryptophan biosynthesis; L-tryptophan from chorismate: step 1/5. Feedback inhibition by tryptophan. In terms of biological role, part of a heterotetrameric complex that catalyzes the two-step biosynthesis of anthranilate, an intermediate in the biosynthesis of L-tryptophan. In the first step, the glutamine-binding beta subunit of anthranilate synthase (AS) provides the glutamine amidotransferase activity which generates ammonia as a substrate that, along with chorismate, is used in the second step, catalyzed by the large alpha subunit of AS to produce anthranilate. The protein is Anthranilate synthase beta subunit 2, chloroplastic (ASB2) of Arabidopsis thaliana (Mouse-ear cress).